The sequence spans 534 residues: Kelch repeat and BTB domain-containing protein 4 (534 aa).

In terms of domain architecture, BTB spans 61 to 128 (ADVTISVEGR…IYHGTVKLRA (68 aa)). Residues 163–255 (CLQVMWLADR…SLKEIGENVH (93 aa)) enclose the BACK domain. 5 Kelch repeats span residues 255–301 (HIYL…KHGG), 302–344 (DLYV…SVPG), 347–394 (AIYS…NLNG), 396–446 (IYLL…VHKD), and 448–497 (VFIV…VFRD).

In terms of assembly, component of the BCR(KBTBD4) E3 ubiquitin ligase complex, at least composed of CUL3, KBTBD4 and RBX1.

In terms of biological role, substrate-specific adapter of a BCR (BTB-CUL3-RBX1) E3 ubiquitin ligase complex which targets CoREST corepressor complex components RCOR1, KDM1A/LSD1 and HDAC2 for proteasomal degradation. RCOR1 is likely to be the primary target while degradation of KDM1A and HDAC2 is likely due to their association with RCOR1. Also targets RCOR3, MIER2 and MIER3 for proteasomal degradation as well as associated proteins ZNF217 and RREB1. Degradation is dependent on the presence of an ELM2 domain in the target proteins. The sequence is that of Kelch repeat and BTB domain-containing protein 4 (Kbtbd4) from Mus musculus (Mouse).